A 96-amino-acid chain; its full sequence is DNA-directed RNA polymerase subunit Rpo11 (96 aa).

It belongs to the archaeal Rpo11/eukaryotic RPB11/RPC19 RNA polymerase subunit family. Part of the RNA polymerase complex.

The protein localises to the cytoplasm. It carries out the reaction RNA(n) + a ribonucleoside 5'-triphosphate = RNA(n+1) + diphosphate. DNA-dependent RNA polymerase (RNAP) catalyzes the transcription of DNA into RNA using the four ribonucleoside triphosphates as substrates. This is DNA-directed RNA polymerase subunit Rpo11 from Methanococcus maripaludis (strain C6 / ATCC BAA-1332).